An 811-amino-acid polypeptide reads, in one-letter code: Glycerol-3-phosphate acyltransferase (811 aa).

Positions 308-313 (CHRSHM) match the HXXXXD motif motif.

This sequence belongs to the GPAT/DAPAT family.

It localises to the cell inner membrane. It catalyses the reaction sn-glycerol 3-phosphate + an acyl-CoA = a 1-acyl-sn-glycero-3-phosphate + CoA. Its pathway is phospholipid metabolism; CDP-diacylglycerol biosynthesis; CDP-diacylglycerol from sn-glycerol 3-phosphate: step 1/3. The polypeptide is Glycerol-3-phosphate acyltransferase (Pseudoalteromonas atlantica (strain T6c / ATCC BAA-1087)).